Reading from the N-terminus, the 117-residue chain is Immunoglobulin kappa variable 1-17 (117 aa).

The first 22 residues, 1–22 (MDMRVPAQLLGLLLLWFPGARC), serve as a signal peptide directing secretion. The tract at residues 23–45 (DIQMTQSPSSLSASVGDRVTITC) is framework-1. In terms of domain architecture, Ig-like spans 24–117 (IQMTQSPSSL…YYCLQHNSYP (94 aa)). An intrachain disulfide couples Cys-45 to Cys-110. The interval 46–56 (RASQGIRNDLG) is complementarity-determining-1. The tract at residues 57-71 (WYQQKPGKAPKRLIY) is framework-2. A complementarity-determining-2 region spans residues 72–78 (AASSLQS). The tract at residues 79-110 (GVPSRFSGSGSGTEFTLTISSLQPEDFATYYC) is framework-3. The segment at 111 to 117 (LQHNSYP) is complementarity-determining-3.

Immunoglobulins are composed of two identical heavy chains and two identical light chains; disulfide-linked.

The protein localises to the secreted. The protein resides in the cell membrane. In terms of biological role, v region of the variable domain of immunoglobulin light chains that participates in the antigen recognition. Immunoglobulins, also known as antibodies, are membrane-bound or secreted glycoproteins produced by B lymphocytes. In the recognition phase of humoral immunity, the membrane-bound immunoglobulins serve as receptors which, upon binding of a specific antigen, trigger the clonal expansion and differentiation of B lymphocytes into immunoglobulins-secreting plasma cells. Secreted immunoglobulins mediate the effector phase of humoral immunity, which results in the elimination of bound antigens. The antigen binding site is formed by the variable domain of one heavy chain, together with that of its associated light chain. Thus, each immunoglobulin has two antigen binding sites with remarkable affinity for a particular antigen. The variable domains are assembled by a process called V-(D)-J rearrangement and can then be subjected to somatic hypermutations which, after exposure to antigen and selection, allow affinity maturation for a particular antigen. The chain is Immunoglobulin kappa variable 1-17 from Homo sapiens (Human).